Consider the following 59-residue polypeptide: U-myrmeciitoxin(01)-Mg5a (59 aa).

Positions 1-21 (MRLSYLSLALAIIFVLTIMHA) are cleaved as a signal peptide. Residues 22–38 (SNVEAKASADPEPDAVG) constitute a propeptide that is removed on maturation.

In terms of tissue distribution, expressed by the venom gland.

Its subcellular location is the secreted. Functionally, may have antimicrobial properties, like most ant linear peptides. The sequence is that of U-myrmeciitoxin(01)-Mg5a from Myrmecia gulosa (Red bulldog ant).